The sequence spans 138 residues: uncharacterized protein (138 aa).

The next 3 membrane-spanning stretches (helical) occupy residues leucine 12–isoleucine 32, leucine 62–leucine 82, and phenylalanine 111–serine 131.

It localises to the cell membrane. This is an uncharacterized protein from Haemophilus influenzae (strain ATCC 51907 / DSM 11121 / KW20 / Rd).